We begin with the raw amino-acid sequence, 203 residues long: Small ribosomal subunit protein uS4c (203 aa).

Residues 18-42 are disordered; it reads LPGLTSKRPKNRKDSMNMNRSSSRK. The span at 33–42 shows a compositional bias: polar residues; the sequence is MNMNRSSSRK. The S4 RNA-binding domain occupies 91–152; sequence MRLDNIIFRL…QPRLRAIIKK (62 aa).

Belongs to the universal ribosomal protein uS4 family. In terms of assembly, part of the 30S ribosomal subunit. Contacts protein S5. The interaction surface between S4 and S5 is involved in control of translational fidelity.

Its subcellular location is the plastid. The protein resides in the chloroplast. One of the primary rRNA binding proteins, it binds directly to 16S rRNA where it nucleates assembly of the body of the 30S subunit. Its function is as follows. With S5 and S12 plays an important role in translational accuracy. In Pinus koraiensis (Korean pine), this protein is Small ribosomal subunit protein uS4c (rps4).